The following is a 441-amino-acid chain: GTPase Der (441 aa).

EngA-type G domains are found at residues 2 to 164 (QKVA…PADE) and 173 to 343 (IRIS…EKWQ). GTP is bound by residues 8–15 (GRPNVGKS), 55–59 (DTGGL), 116–119 (NKID), 179–186 (GRPNVGKS), 226–230 (DTAGI), and 288–291 (NKWD). Residues 344–428 (SRIPTAELNR…PVRLKWKEKG (85 aa)) form the KH-like domain.

The protein belongs to the TRAFAC class TrmE-Era-EngA-EngB-Septin-like GTPase superfamily. EngA (Der) GTPase family. As to quaternary structure, associates with the 50S ribosomal subunit.

GTPase that plays an essential role in the late steps of ribosome biogenesis. The sequence is that of GTPase Der from Deinococcus geothermalis (strain DSM 11300 / CIP 105573 / AG-3a).